The sequence spans 312 residues: Formimidoylglutamase (312 aa).

Mn(2+)-binding residues include His-128, Asp-153, His-155, Asp-157, Asp-240, and Asp-242.

This sequence belongs to the arginase family. It depends on Mn(2+) as a cofactor.

The enzyme catalyses N-formimidoyl-L-glutamate + H2O = formamide + L-glutamate. Its pathway is amino-acid degradation; L-histidine degradation into L-glutamate; L-glutamate from N-formimidoyl-L-glutamate (hydrolase route): step 1/1. Catalyzes the conversion of N-formimidoyl-L-glutamate to L-glutamate and formamide. In Enterobacter sp. (strain 638), this protein is Formimidoylglutamase.